Consider the following 208-residue polypeptide: MRLIRTLFVAALAMGTSLAHADDSAAVQRLTGLLNKAQTLTARFSQLTLDGSGTRLQETAGQLSLKRPGLFRWHTDAPNEQLLISNGEKVWLYDPDLEQVTIQKLDQRLTQTPALLLSGDISKISESFAITYKEGGNVVDFVLKPKTKDTLFDTLRLSFRSGKVNDMQMIDGVGQRTNILFFDVKMNEALDAKQFTFDVPPGVDVIQE.

Residues 1 to 21 (MRLIRTLFVAALAMGTSLAHA) form the signal peptide.

It belongs to the LolA family. As to quaternary structure, monomer.

It localises to the periplasm. Participates in the translocation of lipoproteins from the inner membrane to the outer membrane. Only forms a complex with a lipoprotein if the residue after the N-terminal Cys is not an aspartate (The Asp acts as a targeting signal to indicate that the lipoprotein should stay in the inner membrane). The chain is Outer-membrane lipoprotein carrier protein from Pseudomonas paraeruginosa (strain DSM 24068 / PA7) (Pseudomonas aeruginosa (strain PA7)).